The following is an 88-amino-acid chain: Large ribosomal subunit protein eL34 (88 aa).

A disordered region spans residues 41-72 (RPLNGIPRGRPNELRKLPKTKKRPERPMPNLC).

The protein belongs to the eukaryotic ribosomal protein eL34 family.

The chain is Large ribosomal subunit protein eL34 from Thermococcus sibiricus (strain DSM 12597 / MM 739).